The following is a 92-amino-acid chain: Large ribosomal subunit protein bL28 (92 aa).

This sequence belongs to the bacterial ribosomal protein bL28 family.

The sequence is that of Large ribosomal subunit protein bL28 from Borreliella afzelii (strain PKo) (Borrelia afzelii).